The chain runs to 94 residues: Co-chaperonin GroES (94 aa).

This sequence belongs to the GroES chaperonin family. In terms of assembly, heptamer of 7 subunits arranged in a ring. Interacts with the chaperonin GroEL.

Its subcellular location is the cytoplasm. In terms of biological role, together with the chaperonin GroEL, plays an essential role in assisting protein folding. The GroEL-GroES system forms a nano-cage that allows encapsulation of the non-native substrate proteins and provides a physical environment optimized to promote and accelerate protein folding. GroES binds to the apical surface of the GroEL ring, thereby capping the opening of the GroEL channel. This chain is Co-chaperonin GroES, found in Leuconostoc citreum (strain KM20).